Reading from the N-terminus, the 83-residue chain is Aspergillic acid biosynthesis cluster protein F (83 aa).

It participates in secondary metabolite biosynthesis. Functionally, part of the gene cluster that mediates the biosynthesis of aspergillic acid, a hydroxamic acid-containing pyrazinone with aliphatic side chains that originates from leucine (Leu) and isoleucine (Ile). Aspergillic acid has antibiotic properties and was shown to be lethal to mice. The first step in the pathway is the production of deoxyaspergillic acid via a condensation between the Ile amine and the Leu carboxylic acid, followed by a reductive release from the protein forming the dipeptide aldehyde NH(2)-Leu-Ile-CHO, which could undergo an intermolecular cyclization resulting in a dihydropyrazinone. As the NRPS asaC lacks a condensation domain, it is improbable that it is responsible for condensation of Leu and Ile. One possibility is that asaC acts on a previously condensed dipeptide and functions as a Leu-Ile reductase to yield deoxyaspergillic acid. After asaC forms deoxyaspergillic acid, the cytochrome P450 asaD oxidizes the pyrazinone to the hydroxamic acid-containing bioactive metabolite aspergillic acid. The hydroxylase/desaturase asaB can then convert aspergillic acid to hydroxyaspergillic acid. Both aspergillic acid and hydroxyaspergillic acid can form complexes with iron producing ferriaspergillin analogs. This Aspergillus flavus (strain ATCC 200026 / FGSC A1120 / IAM 13836 / NRRL 3357 / JCM 12722 / SRRC 167) protein is Aspergillic acid biosynthesis cluster protein F.